Consider the following 76-residue polypeptide: Acyl carrier protein (76 aa).

The 76-residue stretch at 1 to 76 (MSVEEKISKI…DAIAYIKNKQ (76 aa)) folds into the Carrier domain. Ser36 is modified (O-(pantetheine 4'-phosphoryl)serine).

It belongs to the acyl carrier protein (ACP) family. In terms of processing, 4'-phosphopantetheine is transferred from CoA to a specific serine of apo-ACP by AcpS. This modification is essential for activity because fatty acids are bound in thioester linkage to the sulfhydryl of the prosthetic group.

It is found in the cytoplasm. Its pathway is lipid metabolism; fatty acid biosynthesis. Carrier of the growing fatty acid chain in fatty acid biosynthesis. In Nitratidesulfovibrio vulgaris (strain DSM 19637 / Miyazaki F) (Desulfovibrio vulgaris), this protein is Acyl carrier protein.